A 199-amino-acid chain; its full sequence is Casparian strip membrane protein 1 (199 aa).

Residues M1–G37 are Cytoplasmic-facing. Residues I38–A58 traverse the membrane as a helical segment. The Extracellular segment spans residues A59–Q87. A helical membrane pass occupies residues F88 to I108. The Cytoplasmic portion of the chain corresponds to V109–R120. Residues L121–A141 form a helical membrane-spanning segment. The Extracellular segment spans residues A142–G173. A helical membrane pass occupies residues A174 to F194. The Cytoplasmic portion of the chain corresponds to A195 to H199.

Belongs to the Casparian strip membrane proteins (CASP) family. In terms of assembly, homodimer and heterodimers.

It localises to the cell membrane. Its function is as follows. Regulates membrane-cell wall junctions and localized cell wall deposition. Required for establishment of the Casparian strip membrane domain (CSD) and the subsequent formation of Casparian strips, a cell wall modification of the root endodermis that determines an apoplastic barrier between the intraorganismal apoplasm and the extraorganismal apoplasm and prevents lateral diffusion. This chain is Casparian strip membrane protein 1, found in Populus trichocarpa (Western balsam poplar).